The sequence spans 682 residues: Polycomb protein suz12-B (682 aa).

A disordered region spans residues 326–355; the sequence is DPSDPSTAPVAKPLSTRNSDTSTTESRIST. A compositionally biased stretch (polar residues) spans 340-354; it reads STRNSDTSTTESRIS. A C2H2-type zinc finger spans residues 408–431; the sequence is LHCPWCTLNCRKLYSLLKHLKLSH. The segment at 523 to 599 is VEFS-box; that stretch reads RLYFHSDSCM…NQMSQASMLF (77 aa).

The protein belongs to the VEFS (VRN2-EMF2-FIS2-SU(Z)12) family. In terms of assembly, component of the prc2/eed-ezh2 complex.

Its subcellular location is the nucleus. Polycomb group (PcG) protein. Component of the prc2/eed-ezh2 complex, which methylates 'Lys-9' and 'Lys-27' of histone H3, leading to transcriptional repression of the affected target gene. In Danio rerio (Zebrafish), this protein is Polycomb protein suz12-B (suz12b).